The sequence spans 181 residues: Translation initiation factor IF-3 (181 aa).

It belongs to the IF-3 family. In terms of assembly, monomer.

The protein resides in the cytoplasm. IF-3 binds to the 30S ribosomal subunit and shifts the equilibrium between 70S ribosomes and their 50S and 30S subunits in favor of the free subunits, thus enhancing the availability of 30S subunits on which protein synthesis initiation begins. This Mycoplasma capricolum subsp. capricolum (strain California kid / ATCC 27343 / NCTC 10154) protein is Translation initiation factor IF-3.